We begin with the raw amino-acid sequence, 155 residues long: Transcription antitermination protein NusB (155 aa).

The protein belongs to the NusB family.

In terms of biological role, involved in transcription antitermination. Required for transcription of ribosomal RNA (rRNA) genes. Binds specifically to the boxA antiterminator sequence of the ribosomal RNA (rrn) operons. This is Transcription antitermination protein NusB from Ralstonia pickettii (strain 12J).